Consider the following 423-residue polypeptide: UPF0229 protein PFLU_5583 (423 aa).

The segment at 64–109 is disordered; it reads LHHGRGGKQTVVHPGNKEFTTGEHIQRPQGGGGGKGPGKAGNSGEG. Residues 92 to 107 are compositionally biased toward gly residues; the sequence is QGGGGGKGPGKAGNSG.

This sequence belongs to the UPF0229 family.

In Pseudomonas fluorescens (strain SBW25), this protein is UPF0229 protein PFLU_5583.